The primary structure comprises 379 residues: Homoserine O-succinyltransferase (379 aa).

The AB hydrolase-1 domain occupies 48 to 357 (NAVLICHALS…SAHGHDAFLM (310 aa)). S154 functions as the Nucleophile in the catalytic mechanism. A substrate-binding site is contributed by R224. Residues D319 and H352 contribute to the active site. D353 lines the substrate pocket.

It belongs to the AB hydrolase superfamily. MetX family. In terms of assembly, homodimer.

Its subcellular location is the cytoplasm. The enzyme catalyses L-homoserine + succinyl-CoA = O-succinyl-L-homoserine + CoA. The protein operates within amino-acid biosynthesis; L-methionine biosynthesis via de novo pathway; O-succinyl-L-homoserine from L-homoserine: step 1/1. Its function is as follows. Transfers a succinyl group from succinyl-CoA to L-homoserine, forming succinyl-L-homoserine. The sequence is that of Homoserine O-succinyltransferase from Neisseria meningitidis serogroup A / serotype 4A (strain DSM 15465 / Z2491).